A 344-amino-acid chain; its full sequence is Phenylalanine--tRNA ligase alpha subunit (344 aa).

Glu257 lines the Mg(2+) pocket.

Belongs to the class-II aminoacyl-tRNA synthetase family. Phe-tRNA synthetase alpha subunit type 1 subfamily. In terms of assembly, tetramer of two alpha and two beta subunits. It depends on Mg(2+) as a cofactor.

Its subcellular location is the cytoplasm. The catalysed reaction is tRNA(Phe) + L-phenylalanine + ATP = L-phenylalanyl-tRNA(Phe) + AMP + diphosphate + H(+). This is Phenylalanine--tRNA ligase alpha subunit from Chlorobium chlorochromatii (strain CaD3).